The following is a 513-amino-acid chain: cAMP-regulated M3R protein (513 aa).

The protein to D.discoideum protein M3L.

The polypeptide is cAMP-regulated M3R protein (prtB) (Dictyostelium discoideum (Social amoeba)).